Consider the following 184-residue polypeptide: Casparian strip membrane protein 1 (184 aa).

Topologically, residues 1 to 24 (MKESGEHGETSKAPLNRGVSKGLS) are cytoplasmic. A helical membrane pass occupies residues 25 to 45 (VLDLILRFIAIIGTLASAIAM). The Extracellular portion of the chain corresponds to 46–72 (GTTNETLPFFTQFIRFKAQYSDLPTLT). Asn-49 carries N-linked (GlcNAc...) asparagine glycosylation. The helical transmembrane segment at 73–93 (FFVVANSIVCAYLILSLPLSI) threads the bilayer. Residues 94–105 (VHIIRSRAKFSR) are Cytoplasmic-facing. A helical membrane pass occupies residues 106–126 (LLLIFLDAVMLALVTAGASAA). The Extracellular segment spans residues 127 to 159 (AAIVYLAHKGNVRANWLAICQQFDSFCERISGS). Residues 160 to 180 (LIGSFGAMVVLILLILLSAIA) form a helical membrane-spanning segment. Topologically, residues 181-184 (LARR) are cytoplasmic.

Belongs to the Casparian strip membrane proteins (CASP) family. As to quaternary structure, homodimer and heterodimers.

The protein resides in the cell membrane. Its function is as follows. Regulates membrane-cell wall junctions and localized cell wall deposition. Required for establishment of the Casparian strip membrane domain (CSD) and the subsequent formation of Casparian strips, a cell wall modification of the root endodermis that determines an apoplastic barrier between the intraorganismal apoplasm and the extraorganismal apoplasm and prevents lateral diffusion. The polypeptide is Casparian strip membrane protein 1 (Panicum virgatum (Blackwell switchgrass)).